The sequence spans 301 residues: 4-hydroxy-tetrahydrodipicolinate synthase (301 aa).

Thr50 is a binding site for pyruvate. The Proton donor/acceptor role is filled by Tyr138. The Schiff-base intermediate with substrate role is filled by Lys167. A pyruvate-binding site is contributed by Ile209.

This sequence belongs to the DapA family. In terms of assembly, homotetramer; dimer of dimers.

Its subcellular location is the cytoplasm. It catalyses the reaction L-aspartate 4-semialdehyde + pyruvate = (2S,4S)-4-hydroxy-2,3,4,5-tetrahydrodipicolinate + H2O + H(+). It participates in amino-acid biosynthesis; L-lysine biosynthesis via DAP pathway; (S)-tetrahydrodipicolinate from L-aspartate: step 3/4. Its function is as follows. Catalyzes the condensation of (S)-aspartate-beta-semialdehyde [(S)-ASA] and pyruvate to 4-hydroxy-tetrahydrodipicolinate (HTPA). The polypeptide is 4-hydroxy-tetrahydrodipicolinate synthase (Sorangium cellulosum (strain So ce56) (Polyangium cellulosum (strain So ce56))).